The primary structure comprises 832 residues: Protein P (832 aa).

Residues M1–Q177 are terminal protein domain (TP). The tract at residues D178–L335 is spacer. Disordered regions lie at residues I186–Q218 and T239–Y266. Positions E336–Q679 are polymerase/reverse transcriptase domain (RT). A Reverse transcriptase domain is found at E346–I589. Mg(2+) contacts are provided by D418, D540, and D541.

The protein belongs to the hepadnaviridae P protein family.

The enzyme catalyses DNA(n) + a 2'-deoxyribonucleoside 5'-triphosphate = DNA(n+1) + diphosphate. It carries out the reaction Endonucleolytic cleavage to 5'-phosphomonoester.. With respect to regulation, activated by host HSP70 and HSP40 in vitro to be able to bind the epsilon loop of the pgRNA. Because deletion of the RNase H region renders the protein partly chaperone-independent, the chaperones may be needed indirectly to relieve occlusion of the RNA-binding site by this domain. Inhibited by several reverse-transcriptase inhibitors: Lamivudine, Adefovir and Entecavir. Its function is as follows. Multifunctional enzyme that converts the viral RNA genome into dsDNA in viral cytoplasmic capsids. This enzyme displays a DNA polymerase activity that can copy either DNA or RNA templates, and a ribonuclease H (RNase H) activity that cleaves the RNA strand of RNA-DNA heteroduplexes in a partially processive 3'- to 5'-endonucleasic mode. Neo-synthesized pregenomic RNA (pgRNA) are encapsidated together with the P protein, and reverse-transcribed inside the nucleocapsid. Initiation of reverse-transcription occurs first by binding the epsilon loop on the pgRNA genome, and is initiated by protein priming, thereby the 5'-end of (-)DNA is covalently linked to P protein. Partial (+)DNA is synthesized from the (-)DNA template and generates the relaxed circular DNA (RC-DNA) genome. After budding and infection, the RC-DNA migrates in the nucleus, and is converted into a plasmid-like covalently closed circular DNA (cccDNA). The activity of P protein does not seem to be necessary for cccDNA generation, and is presumably released from (+)DNA by host nuclear DNA repair machinery. This chain is Protein P, found in Homo sapiens (Human).